A 255-amino-acid polypeptide reads, in one-letter code: Small ribosomal subunit protein uS2 (255 aa).

A disordered region spans residues 232 to 255 (ASGRDLGASEEVPVEPALEEASEA).

It belongs to the universal ribosomal protein uS2 family.

This is Small ribosomal subunit protein uS2 from Sinorhizobium medicae (strain WSM419) (Ensifer medicae).